Here is a 58-residue protein sequence, read N- to C-terminus: MAQVTVGENEGVESALRRFKRAVSKAGIFSDLKRIRHHETPVEKYKRKAQQRRRSRRR.

The segment at 31-58 (DLKRIRHHETPVEKYKRKAQQRRRSRRR) is disordered. Residues 45 to 58 (YKRKAQQRRRSRRR) show a composition bias toward basic residues.

This sequence belongs to the bacterial ribosomal protein bS21 family.

The polypeptide is Small ribosomal subunit protein bS21 (Prochlorococcus marinus (strain MIT 9303)).